The chain runs to 876 residues: Leucine--tRNA ligase (876 aa).

The segment at methionine 1–asparagine 20 is disordered. Residues proline 43 to histidine 53 carry the 'HIGH' region motif. Residues lysine 632–serine 636 carry the 'KMSKS' region motif. Lysine 635 serves as a coordination point for ATP.

It belongs to the class-I aminoacyl-tRNA synthetase family.

It localises to the cytoplasm. The catalysed reaction is tRNA(Leu) + L-leucine + ATP = L-leucyl-tRNA(Leu) + AMP + diphosphate. This Rhizobium leguminosarum bv. trifolii (strain WSM2304) protein is Leucine--tRNA ligase.